The sequence spans 375 residues: Succinyl-diaminopimelate desuccinylase (375 aa).

H66 contributes to the Zn(2+) binding site. The active site involves D68. D99 contacts Zn(2+). E133 acts as the Proton acceptor in catalysis. Residues E134, E162, and H348 each contribute to the Zn(2+) site.

The protein belongs to the peptidase M20A family. DapE subfamily. In terms of assembly, homodimer. Zn(2+) is required as a cofactor. It depends on Co(2+) as a cofactor.

The catalysed reaction is N-succinyl-(2S,6S)-2,6-diaminopimelate + H2O = (2S,6S)-2,6-diaminopimelate + succinate. Its pathway is amino-acid biosynthesis; L-lysine biosynthesis via DAP pathway; LL-2,6-diaminopimelate from (S)-tetrahydrodipicolinate (succinylase route): step 3/3. Its function is as follows. Catalyzes the hydrolysis of N-succinyl-L,L-diaminopimelic acid (SDAP), forming succinate and LL-2,6-diaminopimelate (DAP), an intermediate involved in the bacterial biosynthesis of lysine and meso-diaminopimelic acid, an essential component of bacterial cell walls. This is Succinyl-diaminopimelate desuccinylase from Aeromonas hydrophila subsp. hydrophila (strain ATCC 7966 / DSM 30187 / BCRC 13018 / CCUG 14551 / JCM 1027 / KCTC 2358 / NCIMB 9240 / NCTC 8049).